The chain runs to 246 residues: NAD-dependent protein deacylase (246 aa).

Positions 2–246 (PTAVSDAAAP…AGVCLPAMLA (245 aa)) constitute a Deacetylase sirtuin-type domain. 29 to 49 (GAGVSAESGVPTFRDALTGLW) contacts NAD(+). Residues Tyr74 and Arg77 each coordinate substrate. An NAD(+)-binding site is contributed by 107–110 (QNVD). Catalysis depends on His125, which acts as the Proton acceptor. Zn(2+)-binding residues include Cys137, Cys140, Cys153, and Cys156. NAD(+)-binding positions include 193–195 (GTS), 219–221 (NPE), and Ala237.

It belongs to the sirtuin family. Class III subfamily. Zn(2+) is required as a cofactor.

The protein resides in the cytoplasm. It carries out the reaction N(6)-acetyl-L-lysyl-[protein] + NAD(+) + H2O = 2''-O-acetyl-ADP-D-ribose + nicotinamide + L-lysyl-[protein]. It catalyses the reaction N(6)-succinyl-L-lysyl-[protein] + NAD(+) + H2O = 2''-O-succinyl-ADP-D-ribose + nicotinamide + L-lysyl-[protein]. Functionally, NAD-dependent lysine deacetylase and desuccinylase that specifically removes acetyl and succinyl groups on target proteins. Modulates the activities of several proteins which are inactive in their acylated form. The chain is NAD-dependent protein deacylase from Ralstonia nicotianae (strain ATCC BAA-1114 / GMI1000) (Ralstonia solanacearum).